A 171-amino-acid polypeptide reads, in one-letter code: Flavodoxin (171 aa).

Positions 4–166 (IGLFVGTTTG…RIKEWVKQLK (163 aa)) constitute a Flavodoxin-like domain.

This sequence belongs to the flavodoxin family. FMN serves as cofactor.

Its function is as follows. Low-potential electron donor to a number of redox enzymes. This is Flavodoxin (fld) from Trichodesmium erythraeum (strain IMS101).